Here is a 591-residue protein sequence, read N- to C-terminus: L-fucose isomerase (591 aa).

Residues Glu337 and Asp361 each act as proton acceptor in the active site. Mn(2+) is bound by residues Glu337, Asp361, and His528.

Belongs to the L-fucose isomerase family. Homohexamer. Requires Mn(2+) as cofactor.

It is found in the cytoplasm. The enzyme catalyses L-fucose = L-fuculose. Its pathway is carbohydrate degradation; L-fucose degradation; L-lactaldehyde and glycerone phosphate from L-fucose: step 1/3. Its function is as follows. Converts the aldose L-fucose into the corresponding ketose L-fuculose. In Salmonella choleraesuis (strain SC-B67), this protein is L-fucose isomerase.